The primary structure comprises 267 residues: Ribosomal RNA small subunit methyltransferase A (267 aa).

Positions 18, 20, 45, 66, 91, and 112 each coordinate S-adenosyl-L-methionine.

Belongs to the class I-like SAM-binding methyltransferase superfamily. rRNA adenine N(6)-methyltransferase family. RsmA subfamily.

Its subcellular location is the cytoplasm. It catalyses the reaction adenosine(1518)/adenosine(1519) in 16S rRNA + 4 S-adenosyl-L-methionine = N(6)-dimethyladenosine(1518)/N(6)-dimethyladenosine(1519) in 16S rRNA + 4 S-adenosyl-L-homocysteine + 4 H(+). Its function is as follows. Specifically dimethylates two adjacent adenosines (A1518 and A1519) in the loop of a conserved hairpin near the 3'-end of 16S rRNA in the 30S particle. May play a critical role in biogenesis of 30S subunits. This Shewanella amazonensis (strain ATCC BAA-1098 / SB2B) protein is Ribosomal RNA small subunit methyltransferase A.